Here is a 208-residue protein sequence, read N- to C-terminus: Small ribosomal subunit protein uS4 (208 aa).

The S4 RNA-binding domain occupies 98–158 (SRLDNAVYRL…EKSRNMQVID (61 aa)).

It belongs to the universal ribosomal protein uS4 family. As to quaternary structure, part of the 30S ribosomal subunit. Contacts protein S5. The interaction surface between S4 and S5 is involved in control of translational fidelity.

In terms of biological role, one of the primary rRNA binding proteins, it binds directly to 16S rRNA where it nucleates assembly of the body of the 30S subunit. Functionally, with S5 and S12 plays an important role in translational accuracy. The chain is Small ribosomal subunit protein uS4 from Desulfosudis oleivorans (strain DSM 6200 / JCM 39069 / Hxd3) (Desulfococcus oleovorans).